A 118-amino-acid polypeptide reads, in one-letter code: Large ribosomal subunit protein bL20c (118 aa).

This sequence belongs to the bacterial ribosomal protein bL20 family.

It is found in the plastid. It localises to the chloroplast. Functionally, binds directly to 23S ribosomal RNA and is necessary for the in vitro assembly process of the 50S ribosomal subunit. It is not involved in the protein synthesizing functions of that subunit. This Gracilaria tenuistipitata var. liui (Red alga) protein is Large ribosomal subunit protein bL20c.